We begin with the raw amino-acid sequence, 322 residues long: Ferrochelatase (322 aa).

Positions 194 and 275 each coordinate Fe cation.

The protein belongs to the ferrochelatase family.

Its subcellular location is the cytoplasm. It carries out the reaction heme b + 2 H(+) = protoporphyrin IX + Fe(2+). It functions in the pathway porphyrin-containing compound metabolism; protoheme biosynthesis; protoheme from protoporphyrin-IX: step 1/1. In terms of biological role, catalyzes the ferrous insertion into protoporphyrin IX. This is Ferrochelatase from Yersinia enterocolitica serotype O:8 / biotype 1B (strain NCTC 13174 / 8081).